The following is a 141-amino-acid chain: Hemoglobin subunit alpha (141 aa).

A Globin domain is found at 1–141 (VLSATDKANV…VATVLTSKYR (141 aa)). Ser3 carries the post-translational modification Phosphoserine. An N6-succinyllysine mark is found at Lys7 and Lys11. N6-acetyllysine; alternate is present on Lys16. Lys16 is subject to N6-succinyllysine; alternate. Phosphotyrosine is present on Tyr24. Lys40 carries the N6-succinyllysine modification. Position 58 (His58) interacts with O2. His87 is a heme b binding site. The residue at position 102 (Ser102) is a Phosphoserine. Thr108 is modified (phosphothreonine). Ser124 is modified (phosphoserine). Residues Thr134 and Thr137 each carry the phosphothreonine modification. A Phosphoserine modification is found at Ser138.

Belongs to the globin family. As to quaternary structure, heterotetramer of two alpha chains and two beta chains. Red blood cells.

Involved in oxygen transport from the lung to the various peripheral tissues. Functionally, hemopressin acts as an antagonist peptide of the cannabinoid receptor CNR1. Hemopressin-binding efficiently blocks cannabinoid receptor CNR1 and subsequent signaling. The chain is Hemoglobin subunit alpha (HBA) from Erinaceus europaeus (Western European hedgehog).